A 344-amino-acid chain; its full sequence is Phosphate acyltransferase (344 aa).

This sequence belongs to the PlsX family. In terms of assembly, homodimer. Probably interacts with PlsY.

The protein localises to the cytoplasm. It carries out the reaction a fatty acyl-[ACP] + phosphate = an acyl phosphate + holo-[ACP]. The protein operates within lipid metabolism; phospholipid metabolism. In terms of biological role, catalyzes the reversible formation of acyl-phosphate (acyl-PO(4)) from acyl-[acyl-carrier-protein] (acyl-ACP). This enzyme utilizes acyl-ACP as fatty acyl donor, but not acyl-CoA. In Sphingopyxis alaskensis (strain DSM 13593 / LMG 18877 / RB2256) (Sphingomonas alaskensis), this protein is Phosphate acyltransferase.